A 218-amino-acid polypeptide reads, in one-letter code: Eukaryotic translation initiation factor 3 subunit K (218 aa).

N-acetylalanine is present on Ala-2. Position 28 is a phosphothreonine (Thr-28). The 163-residue stretch at 42-204 (YDLEANLAVL…SIKPKNIVEK (163 aa)) folds into the PCI domain. Residue Ser-217 is modified to Phosphoserine.

In terms of assembly, component of the eukaryotic translation initiation factor 3 (eIF-3) complex, which is composed of 13 subunits: EIF3A, EIF3B, EIF3C, EIF3D, EIF3E, EIF3F, EIF3G, EIF3H, EIF3I, EIF3J, EIF3K, EIF3L and EIF3M. The eIF-3 complex appears to include 3 stable modules: module A is composed of EIF3A, EIF3B, EIF3G and EIF3I; module B is composed of EIF3F, EIF3H, and EIF3M; and module C is composed of EIF3C, EIF3D, EIF3E, EIF3K and EIF3L. EIF3C of module C binds EIF3B of module A and EIF3H of module B, thereby linking the three modules. EIF3J is a labile subunit that binds to the eIF-3 complex via EIF3B. The eIF-3 complex interacts with RPS6KB1 under conditions of nutrient depletion. Mitogenic stimulation leads to binding and activation of a complex composed of MTOR and RPTOR, leading to phosphorylation and release of RPS6KB1 and binding of EIF4B to eIF-3. Interacts with CCND3, but not with CCND1 and CCND2. As to expression, ubiquitous, with the highest levels of expression in brain, testis and kidney.

The protein resides in the nucleus. It localises to the cytoplasm. In terms of biological role, component of the eukaryotic translation initiation factor 3 (eIF-3) complex, which is required for several steps in the initiation of protein synthesis. The eIF-3 complex associates with the 40S ribosome and facilitates the recruitment of eIF-1, eIF-1A, eIF-2:GTP:methionyl-tRNAi and eIF-5 to form the 43S pre-initiation complex (43S PIC). The eIF-3 complex stimulates mRNA recruitment to the 43S PIC and scanning of the mRNA for AUG recognition. The eIF-3 complex is also required for disassembly and recycling of post-termination ribosomal complexes and subsequently prevents premature joining of the 40S and 60S ribosomal subunits prior to initiation. The eIF-3 complex specifically targets and initiates translation of a subset of mRNAs involved in cell proliferation, including cell cycling, differentiation and apoptosis, and uses different modes of RNA stem-loop binding to exert either translational activation or repression. In Homo sapiens (Human), this protein is Eukaryotic translation initiation factor 3 subunit K.